Consider the following 360-residue polypeptide: Epoxyqueuosine reductase (360 aa).

Asp142 serves as the catalytic Proton donor. In terms of domain architecture, 4Fe-4S ferredoxin-type spans 187-216 (APTEPVTAHCGSCQACMDVCPTQAIVAPHR). [4Fe-4S] cluster contacts are provided by Cys196, Cys199, Cys202, Cys206, Cys222, Cys249, Cys252, and Cys256.

The protein belongs to the QueG family. In terms of assembly, monomer. Cob(II)alamin is required as a cofactor. Requires [4Fe-4S] cluster as cofactor.

The protein localises to the cytoplasm. It catalyses the reaction epoxyqueuosine(34) in tRNA + AH2 = queuosine(34) in tRNA + A + H2O. It participates in tRNA modification; tRNA-queuosine biosynthesis. Functionally, catalyzes the conversion of epoxyqueuosine (oQ) to queuosine (Q), which is a hypermodified base found in the wobble positions of tRNA(Asp), tRNA(Asn), tRNA(His) and tRNA(Tyr). This Alicycliphilus denitrificans (strain DSM 14773 / CIP 107495 / K601) protein is Epoxyqueuosine reductase.